Consider the following 638-residue polypeptide: MTQLPKTPLLDQVIYPADLRKLEDRDLPQLAREVRDEMIDAVSRTGGHLGAGLGVVELTIAIHSVFDTPDDRLIFDVGHQCYPHKILTGRRDRIRTLRQEDGLSGFTRRAESEYDPFGAAHSSTSISAGLGMAIAADLDKSDRRVIAVIGDGAMSAGMAYEALNNAGALDARLIVILNDNDMSIAPPTGAMSAYLARLASGRTYMGFRDFGKKLTAYLGKNIDRAITRAVEHARGYVTGGTMFEEMGFYHIGPIDGHSFDHLLPVLRNVRDNGRGPVLIHVVTQKGKGYPPAEAAADKYHGVNKFDVITGAQARVKPNAPSYTSVFAEALVQEATLDDKIVGITAAMPNGTGLDKLAEAFPSRCFDVGIAEQHAVTFAAGLAAEGYKPFAALYSTFLQRAYDQVVHDVAIQGLPVRFPIDRAGFVGADGPTHAGSFDTAFLTTLPGFVVMAAADEAELKHMVRTAVAYDGGPISFRYPRGEGVGVDMPARGEILQIGKGRIVKEGTKVALLSFGTRLADCLLAAEDLDAAGLSTTVADARFAKPLDHDLIRQLARHHEMVITVEEGSIGGFGSHVMHFLATEGLLDNGLKLRSLVMPDIWMEQAKPEAMNAHAGLDRAGIVSTVFKALGRGVAVGVAG.

Residues His-79 and 120-122 (AHS) each bind thiamine diphosphate. A Mg(2+)-binding site is contributed by Asp-151. Thiamine diphosphate-binding positions include 152–153 (GA), Asn-180, Tyr-289, and Glu-371. Asn-180 is a Mg(2+) binding site.

It belongs to the transketolase family. DXPS subfamily. As to quaternary structure, homodimer. It depends on Mg(2+) as a cofactor. Thiamine diphosphate serves as cofactor.

It catalyses the reaction D-glyceraldehyde 3-phosphate + pyruvate + H(+) = 1-deoxy-D-xylulose 5-phosphate + CO2. It functions in the pathway metabolic intermediate biosynthesis; 1-deoxy-D-xylulose 5-phosphate biosynthesis; 1-deoxy-D-xylulose 5-phosphate from D-glyceraldehyde 3-phosphate and pyruvate: step 1/1. In terms of biological role, catalyzes the acyloin condensation reaction between C atoms 2 and 3 of pyruvate and glyceraldehyde 3-phosphate to yield 1-deoxy-D-xylulose-5-phosphate (DXP). This Rhizobium johnstonii (strain DSM 114642 / LMG 32736 / 3841) (Rhizobium leguminosarum bv. viciae) protein is 1-deoxy-D-xylulose-5-phosphate synthase.